The chain runs to 319 residues: Ribonucleoside-diphosphate reductase small chain (319 aa).

The Fe cation site is built by Asp70, Glu101, and His104. Tyr108 is an active-site residue. Positions 163, 197, and 200 each coordinate Fe cation. The interval Phe313–Phe319 is interaction with R1.

It belongs to the ribonucleoside diphosphate reductase small chain family. As to quaternary structure, interacts with RNR1/OPG080 subunit. Can interact with host RNR1 supunit. Requires Fe cation as cofactor.

The enzyme catalyses a 2'-deoxyribonucleoside 5'-diphosphate + [thioredoxin]-disulfide + H2O = a ribonucleoside 5'-diphosphate + [thioredoxin]-dithiol. Functionally, ribonucleoside-diphosphate reductase holoenzyme provides the precursors necessary for viral DNA synthesis. Allows virus growth in non-dividing cells. Catalyzes the biosynthesis of deoxyribonucleotides from the corresponding ribonucleotides. In Homo sapiens (Human), this protein is Ribonucleoside-diphosphate reductase small chain (OPG048).